Consider the following 95-residue polypeptide: Small ribosomal subunit protein uS17 (95 aa).

Belongs to the universal ribosomal protein uS17 family. As to quaternary structure, part of the 30S ribosomal subunit.

Functionally, one of the primary rRNA binding proteins, it binds specifically to the 5'-end of 16S ribosomal RNA. The chain is Small ribosomal subunit protein uS17 from Psychrobacter sp. (strain PRwf-1).